The following is a 100-amino-acid chain: Protein Tat (100 aa).

An interaction with human CREBBP region spans residues methionine 1–asparagine 24. Residues methionine 1–glycine 48 form a transactivation region. Residues cysteine 22, cysteine 25, and cysteine 27 each coordinate Zn(2+). Positions cysteine 22–cysteine 37 are cysteine-rich. Residue lysine 28 is modified to N6-acetyllysine; by host PCAF. Zn(2+)-binding residues include cysteine 30, histidine 33, cysteine 34, and cysteine 37. Residues phenylalanine 38–glycine 48 are core. Basic residues predominate over residues glycine 48–threonine 58. Residues glycine 48 to glutamine 100 form a disordered region. A Nuclear localization signal, RNA-binding (TAR), and protein transduction motif is present at residues arginine 49–arginine 57. The interval arginine 49–lysine 87 is interaction with the host capping enzyme RNGTT. 2 positions are modified to N6-acetyllysine; by host EP300 and GCN5L2: lysine 50 and lysine 51. The residue at position 52 (arginine 52) is an Asymmetric dimethylarginine; by host PRMT6. Over residues serine 63–arginine 79 the composition is skewed to polar residues. A Glycyl lysine isopeptide (Lys-Gly) (interchain with G-Cter in ubiquitin) cross-link involves residue lysine 72. Residues glycine 80–glutamine 100 are compositionally biased toward basic and acidic residues.

This sequence belongs to the lentiviruses Tat family. Interacts with host CCNT1. Associates with the P-TEFb complex composed at least of Tat, P-TEFb (CDK9 and CCNT1), TAR RNA, RNA Pol II. Recruits the HATs CREBBP, TAF1/TFIID, EP300, PCAF and GCN5L2. Interacts with host KAT5/Tip60; this interaction targets the latter to degradation. Interacts with the host deacetylase SIRT1. Interacts with host capping enzyme RNGTT; this interaction stimulates RNGTT. Binds to host KDR, and to the host integrins ITGAV/ITGB3 and ITGA5/ITGB1. Interacts with host KPNB1/importin beta-1 without previous binding to KPNA1/importin alpha-1. Interacts with EIF2AK2. Interacts with host nucleosome assembly protein NAP1L1; this interaction may be required for the transport of Tat within the nucleus, since the two proteins interact at the nuclear rim. Interacts with host C1QBP/SF2P32; this interaction involves lysine-acetylated Tat. Interacts with the host chemokine receptors CCR2, CCR3 and CXCR4. Interacts with host DPP4/CD26; this interaction may trigger an anti-proliferative effect. Interacts with host LDLR. Interacts with the host extracellular matrix metalloproteinase MMP1. Interacts with host PRMT6; this interaction mediates Tat's methylation. Interacts with, and is ubiquitinated by MDM2/Hdm2. Interacts with host PSMC3 and HTATIP2. Interacts with STAB1; this interaction may overcome SATB1-mediated repression of IL2 and IL2RA (interleukin) in T cells by binding to the same domain than HDAC1. Interacts (when acetylated) with human CDK13, thereby increasing HIV-1 mRNA splicing and promoting the production of the doubly spliced HIV-1 protein Nef. Interacts with host TBP; this interaction modulates the activity of transcriptional pre-initiation complex. Interacts with host RELA. Asymmetrical arginine methylation by host PRMT6 seems to diminish the transactivation capacity of Tat and affects the interaction with host CCNT1. In terms of processing, acetylation by EP300, CREBBP, GCN5L2/GCN5 and PCAF regulates the transactivation activity of Tat. EP300-mediated acetylation of Lys-50 promotes dissociation of Tat from the TAR RNA through the competitive binding to PCAF's bromodomain. In addition, the non-acetylated Tat's N-terminus can also interact with PCAF. PCAF-mediated acetylation of Lys-28 enhances Tat's binding to CCNT1. Lys-50 is deacetylated by SIRT1. Post-translationally, polyubiquitination by host MDM2 does not target Tat to degradation, but activates its transactivation function and fosters interaction with CCNT1 and TAR RNA. Phosphorylated by EIF2AK2 on serine and threonine residues adjacent to the basic region important for TAR RNA binding and function. Phosphorylation of Tat by EIF2AK2 is dependent on the prior activation of EIF2AK2 by dsRNA.

The protein localises to the host nucleus. Its subcellular location is the host nucleolus. The protein resides in the host cytoplasm. It localises to the secreted. Transcriptional activator that increases RNA Pol II processivity, thereby increasing the level of full-length viral transcripts. Recognizes a hairpin structure at the 5'-LTR of the nascent viral mRNAs referred to as the transactivation responsive RNA element (TAR) and recruits the cyclin T1-CDK9 complex (P-TEFb complex) that will in turn hyperphosphorylate the RNA polymerase II to allow efficient elongation. The CDK9 component of P-TEFb and other Tat-activated kinases hyperphosphorylate the C-terminus of RNA Pol II that becomes stabilized and much more processive. Other factors such as HTATSF1/Tat-SF1, SUPT5H/SPT5, and HTATIP2 are also important for Tat's function. Besides its effect on RNA Pol II processivity, Tat induces chromatin remodeling of proviral genes by recruiting the histone acetyltransferases (HATs) CREBBP, EP300 and PCAF to the chromatin. This also contributes to the increase in proviral transcription rate, especially when the provirus integrates in transcriptionally silent region of the host genome. To ensure maximal activation of the LTR, Tat mediates nuclear translocation of NF-kappa-B by interacting with host RELA. Through its interaction with host TBP, Tat may also modulate transcription initiation. Tat can reactivate a latently infected cell by penetrating in it and transactivating its LTR promoter. In the cytoplasm, Tat is thought to act as a translational activator of HIV-1 mRNAs. In terms of biological role, extracellular circulating Tat can be endocytosed by surrounding uninfected cells via the binding to several surface receptors such as CD26, CXCR4, heparan sulfate proteoglycans (HSPG) or LDLR. Neurons are rarely infected, but they internalize Tat via their LDLR. Through its interaction with nuclear HATs, Tat is potentially able to control the acetylation-dependent cellular gene expression. Modulates the expression of many cellular genes involved in cell survival, proliferation or in coding for cytokines or cytokine receptors. Tat plays a role in T-cell and neurons apoptosis. Tat induced neurotoxicity and apoptosis probably contribute to neuroAIDS. Circulating Tat also acts as a chemokine-like and/or growth factor-like molecule that binds to specific receptors on the surface of the cells, affecting many cellular pathways. In the vascular system, Tat binds to ITGAV/ITGB3 and ITGA5/ITGB1 integrins dimers at the surface of endothelial cells and competes with bFGF for heparin-binding sites, leading to an excess of soluble bFGF. The protein is Protein Tat of Pan (chimpanzees).